The chain runs to 168 residues: G/U mismatch-specific DNA glycosylase (168 aa).

This sequence belongs to the uracil-DNA glycosylase (UDG) superfamily. TDG/mug family. As to quaternary structure, binds DNA as a monomer.

The protein resides in the cytoplasm. It carries out the reaction Specifically hydrolyzes mismatched double-stranded DNA and polynucleotides, releasing free uracil.. Excises ethenocytosine and uracil, which can arise by alkylation or deamination of cytosine, respectively, from the corresponding mispairs with guanine in ds-DNA. It is capable of hydrolyzing the carbon-nitrogen bond between the sugar-phosphate backbone of the DNA and the mispaired base. The complementary strand guanine functions in substrate recognition. Required for DNA damage lesion repair in stationary-phase cells. This is G/U mismatch-specific DNA glycosylase from Cronobacter sakazakii (strain ATCC BAA-894) (Enterobacter sakazakii).